A 172-amino-acid polypeptide reads, in one-letter code: Probable metallophosphoesterase MTH_1774 (172 aa).

Residues aspartate 8, histidine 10, aspartate 37, asparagine 59, histidine 85, histidine 113, and histidine 115 each contribute to the a divalent metal cation site.

Belongs to the metallophosphoesterase superfamily. YfcE family. Requires a divalent metal cation as cofactor.

This Methanothermobacter thermautotrophicus (strain ATCC 29096 / DSM 1053 / JCM 10044 / NBRC 100330 / Delta H) (Methanobacterium thermoautotrophicum) protein is Probable metallophosphoesterase MTH_1774.